The chain runs to 274 residues: NAD(P)H dehydrogenase [quinone] 1 (274 aa).

Ala2 carries the post-translational modification N-acetylalanine. FAD-binding positions include His12, 18 to 19 (FN), and Gln67. At Ser82 the chain carries Phosphoserine. FAD is bound at residue 104–107 (LYWF). Residue 126–128 (AYT) coordinates substrate. FAD is bound by residues 148 to 151 (TTGG), Tyr156, and Arg201. An important for apoenzyme conformational stability region spans residues 225 to 274 (PSSLFDLNFQAGFLLKKEVQEEQKKNKFGLSVGHHLGKSIPADNQIKARK). Residue Lys251 forms a Glycyl lysine isopeptide (Lys-Gly) (interchain with G-Cter in SUMO2) linkage.

The protein belongs to the NAD(P)H dehydrogenase (quinone) family. As to quaternary structure, homodimer. Interacts with PDLIM4 isoform 2; this interaction stabilizes PDLIM4 isoform 2 in response to oxidative stress and protects it from ubiquitin-independent degradation by the core 20S proteasome. Interacts with TP73 (via SAM domain); this interaction is NADH-dependent, stabilizes TP73 in response to oxidative stress and protects it from ubiquitin-independent degradation by the 20S proteasome. Interacts with TP53; this interaction is NADH-dependent, stabilizes TP53 in response to oxidative stress and protects it from ubiquitin-independent degradation by the 20S proteasome. Requires FAD as cofactor.

The protein resides in the cytoplasm. Its subcellular location is the cytosol. It catalyses the reaction a quinone + NADH + H(+) = a quinol + NAD(+). It carries out the reaction a quinone + NADPH + H(+) = a quinol + NADP(+). The catalysed reaction is ubiquinone-10 + NADH + H(+) = ubiquinol-10 + NAD(+). The enzyme catalyses menadione + NADH + H(+) = menadiol + NAD(+). Its function is as follows. Flavin-containing quinone reductase that catalyzes two-electron reduction of quinones to hydroquinones using either NADH or NADPH as electron donors. In a ping-pong kinetic mechanism, the electrons are sequentially transferred from NAD(P)H to flavin cofactor and then from reduced flavin to the quinone, bypassing the formation of semiquinone and reactive oxygen species. Regulates cellular redox state primarily through quinone detoxification. Reduces components of plasma membrane redox system such as coenzyme Q and vitamin quinones, producing antioxidant hydroquinone forms. In the process may function as superoxide scavenger to prevent hydroquinone oxidation and facilitate excretion. Alternatively, can activate quinones and their derivatives by generating redox reactive hydroquinones with DNA cross-linking antitumor potential. Acts as a gatekeeper of the core 20S proteasome known to degrade proteins with unstructured regions. Upon oxidative stress, interacts with tumor suppressors TP53 and TP73 in a NADH-dependent way and inhibits their ubiquitin-independent degradation by the 20S proteasome. The protein is NAD(P)H dehydrogenase [quinone] 1 (Nqo1) of Rattus norvegicus (Rat).